The primary structure comprises 484 residues: Probable autolysin PH (484 aa).

One can recognise a Peptidase C51 domain in the interval 5 to 148 (KNQAEKWFDN…YYDDPMYFIR (144 aa)). Positions 181-363 (IMLVAGHGYN…YSKLIAGAIH (183 aa)) constitute a MurNAc-LAA domain. The region spanning 402-472 (KETGYYTVAN…IATGEVDKAG (71 aa)) is the SH3b domain.

The catalysed reaction is Hydrolyzes the link between N-acetylmuramoyl residues and L-amino acid residues in certain cell-wall glycopeptides.. Has weak lytic activity toward S.aureus cells. Full-length protein has no activity, but fusion of the Peptidase C51 domain to the lysostaphin SH3 cell wall binding domain yields an active chimeric enzyme, suggesting that PH may be functional. The chain is Probable autolysin PH from Staphylococcus aureus (strain NCTC 8325 / PS 47).